Reading from the N-terminus, the 260-residue chain is Late transcription factor 1 (260 aa).

The protein belongs to the chordopoxvirinae VLTF-1 family. As to quaternary structure, interacts with the late transcription factors VLTF-2 and VLTF-3. Interacts with the late transcription elongation factor VLTF-4. Interacts with itself.

Functionally, associates with RNA polymerase to initiate transcription from late gene promoters. This is Late transcription factor 1 (OPG093) from Vaccinia virus (strain Ankara) (VACV).